Consider the following 79-residue polypeptide: Putative sulfur carrier protein TM_0983 (79 aa).

C17 serves as the catalytic Cysteine persulfide intermediate.

It belongs to the sulfur carrier protein TusA family.

This is Putative sulfur carrier protein TM_0983 from Thermotoga maritima (strain ATCC 43589 / DSM 3109 / JCM 10099 / NBRC 100826 / MSB8).